Consider the following 706-residue polypeptide: Probable cyclic nucleotide-gated ion channel 3 (706 aa).

At 1-85 the chain is on the cytoplasmic side; that stretch reads MMNPQRNKFV…NDSYLQSWNK (85 aa). The chain crosses the membrane as a helical span at residues 86 to 106; it reads IFLLLSVVALAFDPLFFYIPY. At 107 to 119 the chain is on the extracellular side; sequence VKPERFCLNLDKK. Residues 120 to 140 traverse the membrane as a helical segment; it reads LQTIACVFRTFIDAFYVVHML. Residues 141–174 are Cytoplasmic-facing; that stretch reads FQFHTGFITPSSSGFGRGELNEKHKDIALRYLGS. The chain crosses the membrane as a helical span at residues 175-195; that stretch reads YFLIDLLSILPIPQVVVLAIV. The Extracellular portion of the chain corresponds to 196-208; it reads PRMRRPASLVAKE. Residues 209–229 traverse the membrane as a helical segment; it reads LLKWVIFCQYVPRIARIYPLF. At 230 to 247 the chain is on the cytoplasmic side; it reads KEVTRTSGLVTETAWAGA. The helical transmembrane segment at 248–268 threads the bilayer; the sequence is ALNLFLYMLASHVFGSFWYLI. At 269 to 371 the chain is on the extracellular side; the sequence is SIERKDRCWR…QNLKTSAFEG (103 aa). A helical membrane pass occupies residues 372–392; it reads EIIFAIVICISGLVLFALLIG. At 393–706 the chain is on the cytoplasmic side; the sequence is NMQKYLQSTT…ADPEFPMDET (314 aa). Residues 477-600 and Asp548 each bind a nucleoside 3',5'-cyclic phosphate; that span reads WFQA…KQLR. The calmodulin-binding stretch occupies residues 591-606; it reads YRRLHSKQLRHMFRFY. An IQ domain is found at 611-640; the sequence is QTWAACFIQAAWKRHCRRKLSKALREEEGK.

It belongs to the cyclic nucleotide-gated cation channel (TC 1.A.1.5) family. Homotetramer or heterotetramer.

Its subcellular location is the cell membrane. Functionally, probable cyclic nucleotide-gated ion channel. The protein is Probable cyclic nucleotide-gated ion channel 3 (CNGC3) of Arabidopsis thaliana (Mouse-ear cress).